The following is a 231-amino-acid chain: ATP phosphoribosyltransferase (231 aa).

Belongs to the ATP phosphoribosyltransferase family. Short subfamily. Heteromultimer composed of HisG and HisZ subunits.

The protein localises to the cytoplasm. It catalyses the reaction 1-(5-phospho-beta-D-ribosyl)-ATP + diphosphate = 5-phospho-alpha-D-ribose 1-diphosphate + ATP. The protein operates within amino-acid biosynthesis; L-histidine biosynthesis; L-histidine from 5-phospho-alpha-D-ribose 1-diphosphate: step 1/9. In terms of biological role, catalyzes the condensation of ATP and 5-phosphoribose 1-diphosphate to form N'-(5'-phosphoribosyl)-ATP (PR-ATP). Has a crucial role in the pathway because the rate of histidine biosynthesis seems to be controlled primarily by regulation of HisG enzymatic activity. This chain is ATP phosphoribosyltransferase, found in Brucella suis biovar 1 (strain 1330).